We begin with the raw amino-acid sequence, 73 residues long: MKSFNLLSLSLLLAIASAAAVPDVEGTITNDAATPVNNLDDKRDHCGQVCLNKTGCGGKCPKCDMRSLTCKKA.

Positions 1–20 (MKSFNLLSLSLLLAIASAAA) are cleaved as a signal peptide. 3 disulfide bridges follow: Cys-46/Cys-60, Cys-50/Cys-63, and Cys-56/Cys-70.

This sequence belongs to the UPF0499 family.

The protein localises to the secreted. The polypeptide is UPF0499 protein NFIA_054990 (Neosartorya fischeri (strain ATCC 1020 / DSM 3700 / CBS 544.65 / FGSC A1164 / JCM 1740 / NRRL 181 / WB 181) (Aspergillus fischerianus)).